We begin with the raw amino-acid sequence, 312 residues long: MNWLTNVVRPKIRNILRRETPENLWIKCPDSGQLVFYKDVEANQFVIPGSNYHMRMGASARLKSMFDNETWFDVALPEVTPDPLKFRDERRYADRIKDARARTGMNDAVKVGFGKLEGMGVVIAVQDFDFMGGSLGMAAGEAIVRGLELAVEKKSPFIVFAASGGARMQEGILSLMQMPRTTVAVQMLREARLPYIVVQTNPTTGGVTASYAMLGDVHIAEPGALIGFAGARVIEQTIREKLPEGFQRAEYLLDHGMVDMVVHRHDLRPTLARLCRLLTKAPAVEHAKPAPQLPPPAKPAETAEAPAVATSA.

Residues 24 to 293 form the CoA carboxyltransferase N-terminal domain; sequence LWIKCPDSGQ…VEHAKPAPQL (270 aa). A disordered region spans residues 286–312; it reads HAKPAPQLPPPAKPAETAEAPAVATSA. Over residues 299–312 the composition is skewed to low complexity; that stretch reads PAETAEAPAVATSA.

This sequence belongs to the AccD/PCCB family. Acetyl-CoA carboxylase is a heterohexamer composed of biotin carboxyl carrier protein (AccB), biotin carboxylase (AccC) and two subunits each of ACCase subunit alpha (AccA) and ACCase subunit beta (AccD).

The protein localises to the cytoplasm. It carries out the reaction N(6)-carboxybiotinyl-L-lysyl-[protein] + acetyl-CoA = N(6)-biotinyl-L-lysyl-[protein] + malonyl-CoA. Its pathway is lipid metabolism; malonyl-CoA biosynthesis; malonyl-CoA from acetyl-CoA: step 1/1. Its function is as follows. Component of the acetyl coenzyme A carboxylase (ACC) complex. Biotin carboxylase (BC) catalyzes the carboxylation of biotin on its carrier protein (BCCP) and then the CO(2) group is transferred by the transcarboxylase to acetyl-CoA to form malonyl-CoA. This Bradyrhizobium sp. (strain ORS 278) protein is Acetyl-coenzyme A carboxylase carboxyl transferase subunit beta.